A 351-amino-acid polypeptide reads, in one-letter code: Flagellin (351 aa).

Belongs to the bacterial flagellin family.

The protein resides in the secreted. Its subcellular location is the bacterial flagellum. Functionally, flagellin is the subunit protein which polymerizes to form the filaments of bacterial flagella. This is Flagellin (fliC) from Serratia marcescens.